The following is a 424-amino-acid chain: Elongator complex protein 4 (424 aa).

Belongs to the ELP4 family. In terms of assembly, component of the elongator complex which consists of ELP1, ELP2, ELP3, ELP4, ELP5 and ELP6. As to expression, widely expressed.

It localises to the cytoplasm. It is found in the nucleus. It participates in tRNA modification; 5-methoxycarbonylmethyl-2-thiouridine-tRNA biosynthesis. Functionally, component of the elongator complex which is required for multiple tRNA modifications, including mcm5U (5-methoxycarbonylmethyl uridine), mcm5s2U (5-methoxycarbonylmethyl-2-thiouridine), and ncm5U (5-carbamoylmethyl uridine). The elongator complex catalyzes the formation of carboxymethyluridine in the wobble base at position 34 in tRNAs. The protein is Elongator complex protein 4 (ELP4) of Homo sapiens (Human).